Reading from the N-terminus, the 145-residue chain is MKKILVLHGPNLNLLGSREPSIYGHASLTEINGDLIQEADNAGIRLSCFQSNAEAELIQAVHQAGIDKINYIIINPAAFTHTSIALRDALSAVAIPFIEVHLSNIFSRETFRHHSYFSDIAVGVISGLGTKGYLLALQAIIKELK.

Tyr-23 functions as the Proton acceptor in the catalytic mechanism. Residues Asn-75, His-81, and Asp-88 each contribute to the substrate site. His-101 serves as the catalytic Proton donor. Substrate-binding positions include 102–103 (LS) and Arg-112.

This sequence belongs to the type-II 3-dehydroquinase family. Homododecamer.

The catalysed reaction is 3-dehydroquinate = 3-dehydroshikimate + H2O. It participates in metabolic intermediate biosynthesis; chorismate biosynthesis; chorismate from D-erythrose 4-phosphate and phosphoenolpyruvate: step 3/7. Functionally, catalyzes a trans-dehydration via an enolate intermediate. In Legionella pneumophila (strain Paris), this protein is 3-dehydroquinate dehydratase.